The following is a 301-amino-acid chain: Homoserine O-acetyltransferase (301 aa).

The active-site Acyl-thioester intermediate is the C142. K163 and S192 together coordinate substrate. H235 serves as the catalytic Proton acceptor. E237 is an active-site residue. A substrate-binding site is contributed by R249.

This sequence belongs to the MetA family.

The protein resides in the cytoplasm. It catalyses the reaction L-homoserine + acetyl-CoA = O-acetyl-L-homoserine + CoA. The protein operates within amino-acid biosynthesis; L-methionine biosynthesis via de novo pathway; O-acetyl-L-homoserine from L-homoserine: step 1/1. In terms of biological role, transfers an acetyl group from acetyl-CoA to L-homoserine, forming acetyl-L-homoserine. This chain is Homoserine O-acetyltransferase, found in Bacillus cereus (strain B4264).